Consider the following 148-residue polypeptide: Large ribosomal subunit protein bL9 (148 aa).

The protein belongs to the bacterial ribosomal protein bL9 family.

Functionally, binds to the 23S rRNA. The protein is Large ribosomal subunit protein bL9 of Marinobacter nauticus (strain ATCC 700491 / DSM 11845 / VT8) (Marinobacter aquaeolei).